A 495-amino-acid polypeptide reads, in one-letter code: Phenylalanine--tRNA ligase alpha subunit (495 aa).

L-phenylalanine contacts are provided by residues T338, 377 to 379, and Y417; that span reads QLE. Residue E419 coordinates Mg(2+). An L-phenylalanine-binding site is contributed by F442.

Belongs to the class-II aminoacyl-tRNA synthetase family. Phe-tRNA synthetase alpha subunit type 2 subfamily. In terms of assembly, tetramer of two alpha and two beta subunits. It depends on Mg(2+) as a cofactor.

It is found in the cytoplasm. It catalyses the reaction tRNA(Phe) + L-phenylalanine + ATP = L-phenylalanyl-tRNA(Phe) + AMP + diphosphate + H(+). The polypeptide is Phenylalanine--tRNA ligase alpha subunit (Methanosarcina mazei (strain ATCC BAA-159 / DSM 3647 / Goe1 / Go1 / JCM 11833 / OCM 88) (Methanosarcina frisia)).